Here is an 80-residue protein sequence, read N- to C-terminus: Clavanin-A (80 aa).

The N-terminal stretch at 1–19 is a signal peptide; it reads MKTTILILLILGLGINAKS. Positions 20-29 are excised as a propeptide; it reads LEERKSEEEK. Residue Phe52 is modified to Phenylalanine amide. The propeptide occupies 54 to 80; the sequence is DDQQDNGKFYGHYAEDNGKHWYDTGDQ.

The protein localises to the secreted. In terms of biological role, has antimicrobial activity. This is Clavanin-A from Styela clava (Sea squirt).